Here is a 489-residue protein sequence, read N- to C-terminus: Heme-based aerotactic transducer HemAT (489 aa).

A Methyl-accepting transducer domain is found at 218-454; sequence PLSSLEATSQ…EVAEMVDDVD (237 aa).

It belongs to the methyl-accepting chemotaxis (MCP) protein family. Homotetramer.

In terms of biological role, heme-containing signal transducer responsible for aerotaxis, the migratory response toward or away from oxygen. The chain is Heme-based aerotactic transducer HemAT (hemAT) from Halobacterium salinarum (strain ATCC 700922 / JCM 11081 / NRC-1) (Halobacterium halobium).